Here is a 481-residue protein sequence, read N- to C-terminus: Sucrose phosphorylase (481 aa).

Sucrose contacts are provided by residues Asp-49, His-87, 191–193 (RLD), Glu-234, 291–292 (HD), 335–338 (DIYQ), and Arg-392. Asp-193 (nucleophile) is an active-site residue. Residue Glu-234 is the Proton donor of the active site.

It belongs to the glycosyl hydrolase 13 family. Sucrose phosphorylase subfamily.

It is found in the cytoplasm. It catalyses the reaction sucrose + phosphate = D-fructose + alpha-D-glucose 1-phosphate. In terms of biological role, intracellular catabolism of sucrose. Being intracellular, probably not involved in synthesis of extracellular polysaccharides. This chain is Sucrose phosphorylase, found in Streptococcus mutans serotype c (strain ATCC 700610 / UA159).